Here is a 708-residue protein sequence, read N- to C-terminus: Polyribonucleotide nucleotidyltransferase (708 aa).

Residues aspartate 488 and aspartate 494 each coordinate Mg(2+). In terms of domain architecture, KH spans 555-615 (PIIKVTKVDP…ENVDKAIELI (61 aa)). Residues 625–692 (GEVLEGKVTR…DLGRLQFKRV (68 aa)) enclose the S1 motif domain.

The protein belongs to the polyribonucleotide nucleotidyltransferase family. The cofactor is Mg(2+).

It localises to the cytoplasm. The catalysed reaction is RNA(n+1) + phosphate = RNA(n) + a ribonucleoside 5'-diphosphate. Functionally, involved in mRNA degradation. Catalyzes the phosphorolysis of single-stranded polyribonucleotides processively in the 3'- to 5'-direction. This Thermotoga sp. (strain RQ2) protein is Polyribonucleotide nucleotidyltransferase.